The chain runs to 339 residues: Serine/threonine-protein kinase pdik1l-A (339 aa).

Residues Tyr-8–Phe-332 enclose the Protein kinase domain. ATP-binding positions include Val-14–Val-22 and Lys-37. Residue Asp-164 is the Proton acceptor of the active site.

This sequence belongs to the protein kinase superfamily. Ser/Thr protein kinase family.

Its subcellular location is the nucleus. The catalysed reaction is L-seryl-[protein] + ATP = O-phospho-L-seryl-[protein] + ADP + H(+). It catalyses the reaction L-threonyl-[protein] + ATP = O-phospho-L-threonyl-[protein] + ADP + H(+). The sequence is that of Serine/threonine-protein kinase pdik1l-A (pdik1-a) from Xenopus laevis (African clawed frog).